The following is a 123-amino-acid chain: Large ribosomal subunit protein bL17 (123 aa).

The protein belongs to the bacterial ribosomal protein bL17 family. In terms of assembly, part of the 50S ribosomal subunit. Contacts protein L32.

The sequence is that of Large ribosomal subunit protein bL17 from Borreliella afzelii (strain PKo) (Borrelia afzelii).